A 342-amino-acid chain; its full sequence is 6-hydroxytryprostatin B O-methyltransferase (342 aa).

Asp201 contacts S-adenosyl-L-methionine. His244 (proton acceptor) is an active-site residue.

This sequence belongs to the class I-like SAM-binding methyltransferase superfamily. Cation-independent O-methyltransferase family. Homodimer.

The enzyme catalyses 6-hydroxytryprostatin B + S-adenosyl-L-methionine = tryprostatin A + S-adenosyl-L-homocysteine + H(+). It participates in alkaloid biosynthesis. In terms of biological role, 6-hydroxytryprostatin B O-methyltransferase; part of the gene cluster that mediates the biosynthesis of fumitremorgins, indole alkaloids that carry not only intriguing chemical structures, but also interesting biological and pharmacological activities. The biosynthesis of fumitremorgin-type alkaloids begins by condensation of the two amino acids L-tryptophan and L-proline to brevianamide F, catalyzed by the non-ribosomal peptide synthetase ftmA. Brevianamide F is then prenylated by the prenyltransferase ftmPT1/ftmB in the presence of dimethylallyl diphosphate, resulting in the formation of tryprostatin B. The three cytochrome P450 monooxygenases, ftmP450-1/ftmC, ftmP450-2/ftmE and ftmP450-3/FtmG, are responsible for the conversion of tryprostatin B to 6-hydroxytryprostatin B, tryprostatin A to fumitremorgin C and fumitremorgin C to 12,13-dihydroxyfumitremorgin C, respectively. The putative methyltransferase ftmMT/ftmD is expected for the conversion of 6-hydroxytryprostatin B to tryprostatin A. FtmPT2/FtmH catalyzes the prenylation of 12,13-dihydroxyfumitre-morgin C in the presence of dimethylallyl diphosphate, resulting in the formation of fumitremorgin B. Fumitremorgin B is further converted to verruculogen by ftmOx1/ftmF via the insertion of an endoperoxide bond between the two prenyl moieties. In some fungal species, verruculogen is further converted to fumitremorgin A, but the enzymes involved in this step have not been identified yet. The protein is 6-hydroxytryprostatin B O-methyltransferase of Aspergillus fumigatus (Neosartorya fumigata).